The primary structure comprises 193 residues: RNA polymerase sigma-H factor (193 aa).

The Polymerase core binding motif lies at 49–62; that stretch reads DVAQEAFIKAYRAL. A DNA-binding region (H-T-H motif) is located at residues 157–176; that stretch reads YEDIATVMQCPVGTVRSRIF.

The protein belongs to the sigma-70 factor family. ECF subfamily.

Sigma factors are initiation factors that promote the attachment of RNA polymerase to specific initiation sites and are then released. This sigma factor regulates genes such as algD, involved in alginate biosynthesis. The sequence is that of RNA polymerase sigma-H factor (algU) from Pseudomonas aeruginosa (strain ATCC 15692 / DSM 22644 / CIP 104116 / JCM 14847 / LMG 12228 / 1C / PRS 101 / PAO1).